Reading from the N-terminus, the 290-residue chain is Glutamate 5-kinase (290 aa).

An ATP-binding site is contributed by Lys-21. Residues Ser-60, Asp-151, and Asn-163 each coordinate substrate. Residue 217 to 223 participates in ATP binding; that stretch reads TGGMFTK.

This sequence belongs to the glutamate 5-kinase family.

It localises to the cytoplasm. It catalyses the reaction L-glutamate + ATP = L-glutamyl 5-phosphate + ADP. It participates in amino-acid biosynthesis; L-proline biosynthesis; L-glutamate 5-semialdehyde from L-glutamate: step 1/2. Functionally, catalyzes the transfer of a phosphate group to glutamate to form L-glutamate 5-phosphate. The polypeptide is Glutamate 5-kinase (Leptospira interrogans serogroup Icterohaemorrhagiae serovar copenhageni (strain Fiocruz L1-130)).